We begin with the raw amino-acid sequence, 223 residues long: Probable chemoreceptor glutamine deamidase CheD (223 aa).

Positions 189–223 (QTASAKAHTPPQIERFSAPAKPRFERFTRPSTATS) are disordered.

Belongs to the CheD family.

It carries out the reaction L-glutaminyl-[protein] + H2O = L-glutamyl-[protein] + NH4(+). Functionally, probably deamidates glutamine residues to glutamate on methyl-accepting chemotaxis receptors (MCPs), playing an important role in chemotaxis. The polypeptide is Probable chemoreceptor glutamine deamidase CheD (Bordetella petrii (strain ATCC BAA-461 / DSM 12804 / CCUG 43448)).